A 131-amino-acid chain; its full sequence is Period circadian protein (131 aa).

The tract at residues 29 to 109 is disordered; that stretch reads VTAPVELDPP…NSAGGASGGV (81 aa). Over residues 71–93 the composition is skewed to low complexity; that stretch reads SGNFTTGSNVRMSSVTNTSNAGT. A compositionally biased stretch (gly residues) spans 94–109; it reads GTSGGGNSAGGASGGV.

Forms a heterodimer with timeless (TIM); the complex then translocates into the nucleus. Phosphorylated with a circadian rhythmicity, probably by the double-time protein (dbt). Phosphorylation could be implicated in the stability of per monomer and in the formation of heterodimer per-tim.

It localises to the nucleus. The protein resides in the cytoplasm. It is found in the perinuclear region. Functionally, essential for biological clock functions. Determines the period length of circadian and ultradian rhythms; an increase in PER dosage leads to shortened circadian rhythms and a decrease leads to lengthened circadian rhythms. Essential for the circadian rhythmicity of locomotor activity, eclosion behavior, and for the rhythmic component of the male courtship song that originates in the thoracic nervous system. The biological cycle depends on the rhythmic formation and nuclear localization of the TIM-PER complex. Light induces the degradation of TIM, which promotes elimination of PER. Nuclear activity of the heterodimer coordinatively regulates PER and TIM transcription through a negative feedback loop. Behaves as a negative element in circadian transcriptional loop. Does not appear to bind DNA, suggesting indirect transcriptional inhibition. The chain is Period circadian protein (per) from Zaprionus tuberculatus (Vinegar fly).